The following is an 880-amino-acid chain: Valine--tRNA ligase (880 aa).

Residues 51–61 (PNVTGELHLGH) carry the 'HIGH' region motif. A 'KMSKS' region motif is present at residues 529–533 (KMSKT). Lysine 532 is an ATP binding site. Residues 815-854 (MSTMVDLEVEAKRVKAEISELEIQIERLSTRLSDEQFLAK) are a coiled coil.

Belongs to the class-I aminoacyl-tRNA synthetase family. ValS type 1 subfamily. Monomer.

It is found in the cytoplasm. The catalysed reaction is tRNA(Val) + L-valine + ATP = L-valyl-tRNA(Val) + AMP + diphosphate. In terms of biological role, catalyzes the attachment of valine to tRNA(Val). As ValRS can inadvertently accommodate and process structurally similar amino acids such as threonine, to avoid such errors, it has a 'posttransfer' editing activity that hydrolyzes mischarged Thr-tRNA(Val) in a tRNA-dependent manner. The polypeptide is Valine--tRNA ligase (Dehalococcoides mccartyi (strain CBDB1)).